Reading from the N-terminus, the 915-residue chain is WD repeat-containing protein 44 (915 aa).

Residues 1–14 are compositionally biased toward acidic residues; the sequence is MASESDTEEFYDAP. Residues 1-24 are disordered; it reads MASESDTEEFYDAPEDVHLGTGYP. An N-acetylalanine modification is found at Ala-2. The tract at residues 2-173 is binding activity; it reads ASESDTEEFY…SSGEQLDASG (172 aa). Position 3 is a phosphoserine (Ser-3). An FFAT-like motif motif is present at residues 9–15; the sequence is EFYDAPE. Tyr-11 carries the post-translational modification Phosphotyrosine. Phosphoserine occurs at positions 27, 50, 66, 71, 81, and 126. 3 disordered regions span residues 79-102, 117-174, and 208-282; these read DDSL…VAGT, LQQD…ASGL, and VEEV…PKEN. Positions 114 to 139 form a coiled coil; the sequence is EHELQQDSEKAESQNVAEESELETQK. A compositionally biased stretch (basic and acidic residues) spans 146 to 155; sequence TCEKSEKTVD. Residues Thr-161 and Thr-221 each carry the phosphothreonine modification. The segment at 213-259 is important for interaction with ARHGAP26 AND ARHGAP10; the sequence is PAKPPRHLTPEPDIVASTKKPVPARPPPPTNFPPPRPPPPSRPAPPP. Residues 235–258 are compositionally biased toward pro residues; the sequence is PARPPPPTNFPPPRPPPPSRPAPP. Ser-264 bears the Phosphoserine mark. Positions 264 to 280 are enriched in basic and acidic residues; that stretch reads SELEFEALKTPDLDVPK. Thr-273 carries the phosphothreonine modification. The segment at 336 to 349 is important for interaction with RAB11A; the sequence is VMGPQRPRSNSGRE. Residues Ser-344 and Ser-346 each carry the phosphoserine modification. 2 positions are modified to phosphothreonine: Thr-351 and Thr-403. Disordered stretches follow at residues 399 to 425 and 461 to 481; these read SNDA…RLKQ and DEVF…GMPY. Phosphoserine occurs at positions 405, 472, 473, and 474. Residues 469–478 show a composition bias toward acidic residues; it reads DDPSSSDDEG. The residue at position 481 (Tyr-481) is a Phosphotyrosine. Residues 511–550 form a WD 1 repeat; that stretch reads EHMGAVWTMKFSHCGRLLASAGQDNIVRIWALKNAFDYFN. The disordered stretch occupies residues 559 to 593; that stretch reads EGRVSPSPSQESLSSSKSDTDMGVCSGTDEDPDDK. 2 positions are modified to phosphoserine: Ser-563 and Ser-567. A compositionally biased stretch (low complexity) spans 563–575; sequence SPSPSQESLSSSK. 7 WD repeats span residues 607–645, 647–687, 692–731, 742–781, 786–825, 840–880, and 882–915; these read GHTA…CLCC, QHID…VALW, GQTK…YHTQ, KVGR…LSMK, VNSS…SKFT, AHNA…EVLD, and TSTG…KTVS.

In terms of assembly, interacts with the GTP-bound form of RAB11 when membrane-associated. Interacts with GRAF1/ARHGAP26 or GRAF2/ARHGAP10; the interaction connects the endoplasmic reticulum (ER) with the endosomal tubule. Interacts (via FFAT-like motif) with VAPA (via MSP domain) or VAPB (via MSP domain); the interaction connects the ER with the endosomal tubule. Does not bind to other Rab and Rho small G proteins. In terms of processing, phosphorylated by ATK1; the phosphorylation stabilizes its interaction with RAB11A and RAB11B.

It localises to the cytoplasm. The protein localises to the cytosol. Its subcellular location is the perinuclear region. It is found in the endosome membrane. The protein resides in the golgi apparatus. It localises to the trans-Golgi network. Its function is as follows. Downstream effector for Rab11 which regulates Rab11 intracellular membrane trafficking functions such as endocytic recycling, intracellular ciliogenesis and protein export. ATK1-mediated phosphorylation of WDR44 induces binding to Rab11 which activates endocytic recycling of transferrin receptor back to the plasma membrane. When bound to Rab11, prevents the formation of the ciliogenic Rab11-Rabin8/RAB3IP-RAB11FIP3 complex, therefore inhibiting preciliary trafficking and ciliogenesis. Participates in neo-synthesized protein export by connecting the endoplasmic reticulum (ER) with the endosomal tubule via direct interactions with the integral ER proteins VAPA or VAPB and the endosomal protein GRAFs (GRAF1/ARHGAP26 or GRAF2/ARHGAP10), which facilitates the transfer of proteins such as E-cadherin, MPP14 and CFTR into a Rab8-Rab10-Rab11-dependent export route. The sequence is that of WD repeat-containing protein 44 from Mus musculus (Mouse).